We begin with the raw amino-acid sequence, 585 residues long: Aspartate--tRNA ligase (585 aa).

Residue E171 coordinates L-aspartate. Positions 195–198 (QLFK) are aspartate. R217 contacts L-aspartate. ATP-binding positions include 217–219 (RDE) and Q226. H448 provides a ligand contact to L-aspartate. An ATP-binding site is contributed by E482. R489 contacts L-aspartate. 534-537 (GLDR) contacts ATP.

The protein belongs to the class-II aminoacyl-tRNA synthetase family. Type 1 subfamily. As to quaternary structure, homodimer.

The protein localises to the cytoplasm. It catalyses the reaction tRNA(Asp) + L-aspartate + ATP = L-aspartyl-tRNA(Asp) + AMP + diphosphate. Catalyzes the attachment of L-aspartate to tRNA(Asp) in a two-step reaction: L-aspartate is first activated by ATP to form Asp-AMP and then transferred to the acceptor end of tRNA(Asp). This chain is Aspartate--tRNA ligase, found in Histophilus somni (strain 129Pt) (Haemophilus somnus).